Reading from the N-terminus, the 134-residue chain is uncharacterized protein (134 aa).

Its subcellular location is the cell membrane. May have a role in the regulation of NDH-1 biosynthesis. This is an uncharacterized protein from Paracoccus denitrificans.